Reading from the N-terminus, the 368-residue chain is Peptide chain release factor 2 (368 aa).

The residue at position 250 (Q250) is an N5-methylglutamine.

This sequence belongs to the prokaryotic/mitochondrial release factor family. In terms of processing, methylated by PrmC. Methylation increases the termination efficiency of RF2.

The protein resides in the cytoplasm. Peptide chain release factor 2 directs the termination of translation in response to the peptide chain termination codons UGA and UAA. The protein is Peptide chain release factor 2 of Rickettsia conorii (strain ATCC VR-613 / Malish 7).